The following is a 196-amino-acid chain: Small ribosomal subunit protein uS4c (196 aa).

Residues 15–42 (LGALPGLTRKTPKSGSNQKKKFNSGKKE) are disordered. Residues 89–150 (MRLDNILFRL…NQRSKRLVQN (62 aa)) enclose the S4 RNA-binding domain.

It belongs to the universal ribosomal protein uS4 family. As to quaternary structure, part of the 30S ribosomal subunit. Contacts protein S5. The interaction surface between S4 and S5 is involved in control of translational fidelity.

The protein resides in the plastid. Its subcellular location is the chloroplast. In terms of biological role, one of the primary rRNA binding proteins, it binds directly to 16S rRNA where it nucleates assembly of the body of the 30S subunit. Its function is as follows. With S5 and S12 plays an important role in translational accuracy. This Cenchrus longisetus (Feathertop) protein is Small ribosomal subunit protein uS4c (rps4).